Reading from the N-terminus, the 334-residue chain is Glycerol-3-phosphate dehydrogenase [NAD(P)+] (334 aa).

Residues serine 14, tyrosine 15, histidine 35, and lysine 109 each contribute to the NADPH site. Sn-glycerol 3-phosphate is bound by residues lysine 109, glycine 138, and threonine 140. Alanine 142 contributes to the NADPH binding site. Residues lysine 194, aspartate 247, serine 257, arginine 258, and asparagine 259 each coordinate sn-glycerol 3-phosphate. The active-site Proton acceptor is lysine 194. An NADPH-binding site is contributed by arginine 258. Residues valine 282 and glutamate 284 each contribute to the NADPH site.

The protein belongs to the NAD-dependent glycerol-3-phosphate dehydrogenase family.

The protein resides in the cytoplasm. The enzyme catalyses sn-glycerol 3-phosphate + NAD(+) = dihydroxyacetone phosphate + NADH + H(+). It carries out the reaction sn-glycerol 3-phosphate + NADP(+) = dihydroxyacetone phosphate + NADPH + H(+). It functions in the pathway membrane lipid metabolism; glycerophospholipid metabolism. Catalyzes the reduction of the glycolytic intermediate dihydroxyacetone phosphate (DHAP) to sn-glycerol 3-phosphate (G3P), the key precursor for phospholipid synthesis. The chain is Glycerol-3-phosphate dehydrogenase [NAD(P)+] from Aeromonas hydrophila subsp. hydrophila (strain ATCC 7966 / DSM 30187 / BCRC 13018 / CCUG 14551 / JCM 1027 / KCTC 2358 / NCIMB 9240 / NCTC 8049).